A 249-amino-acid chain; its full sequence is Transmembrane protein 106C (249 aa).

A disordered region spans residues 1–26 (MGSRHSTYAHRPFSKRRKADDTEDSL). Residue Gly2 is the site of N-myristoyl glycine attachment. Helical transmembrane passes span 86–106 (YVLL…FFLF) and 197–217 (SYVY…VVFV).

The protein belongs to the TMEM106 family. In terms of assembly, interacts with TMEM106B.

The protein resides in the endoplasmic reticulum membrane. Its subcellular location is the membrane. This chain is Transmembrane protein 106C (TMEM106C), found in Bos taurus (Bovine).